The following is a 256-amino-acid chain: Pimeloyl-[acyl-carrier protein] methyl ester esterase (256 aa).

One can recognise an AB hydrolase-1 domain in the interval 15–242 (HLVLLHGWGL…AAHAPFISHP (228 aa)). Substrate is bound by residues Trp22, 82 to 83 (SL), and 143 to 147 (FLALQ). The active-site Nucleophile is Ser82. Active-site residues include Asp207 and His235. His235 contacts substrate.

It belongs to the AB hydrolase superfamily. Carboxylesterase BioH family. As to quaternary structure, monomer.

The protein localises to the cytoplasm. The enzyme catalyses 6-carboxyhexanoyl-[ACP] methyl ester + H2O = 6-carboxyhexanoyl-[ACP] + methanol + H(+). The protein operates within cofactor biosynthesis; biotin biosynthesis. The physiological role of BioH is to remove the methyl group introduced by BioC when the pimeloyl moiety is complete. It allows to synthesize pimeloyl-ACP via the fatty acid synthetic pathway through the hydrolysis of the ester bonds of pimeloyl-ACP esters. This chain is Pimeloyl-[acyl-carrier protein] methyl ester esterase, found in Escherichia coli O127:H6 (strain E2348/69 / EPEC).